Here is a 175-residue protein sequence, read N- to C-terminus: uncharacterized protein (175 aa).

Disordered regions lie at residues 1–32 (MSHKDFNGLQAPQLLSSSSPVAKKQSSHKLRH) and 156–175 (KQKQAKRAANTRQRTYKYRQ). Positions 14–24 (LLSSSSPVAKK) are enriched in low complexity.

This is an uncharacterized protein from Mycoplasma pneumoniae (strain ATCC 29342 / M129 / Subtype 1) (Mycoplasmoides pneumoniae).